The following is a 1175-amino-acid chain: Potassium/sodium hyperpolarization-activated cyclic nucleotide-gated channel 4 (1175 aa).

Residues 1–259 (MDKLPPSMRK…SAGFWIIHPY (259 aa)) are Cytoplasmic-facing. Residues 17–186 (QQVGAKAWIM…SSCGEQRPAD (170 aa)) are disordered. The span at 26-36 (MDEEEDAEEEG) shows a compositional bias: acidic residues. The segment covering 60–75 (PSAAAAAAGGAESRGA) has biased composition (low complexity). A compositionally biased stretch (gly residues) spans 111–126 (SRGGGGGGGSTGGGSH). The span at 128–140 (HLHDSAEERRLIA) shows a compositional bias: basic and acidic residues. Ser-145 is subject to Phosphoserine. Positions 162 to 175 (PGAPAPPAASPPQV) are enriched in pro residues. Residues 260–288 (SDFRFYWDLTMLLLMVGNLIIIPVGITFF) form a helical membrane-spanning segment. At 289 to 292 (KDEN) the chain is on the extracellular side. The helical transmembrane segment at 293–316 (TTPWIVFNVVSDTFFLIDLVLNFR) threads the bilayer. Topologically, residues 317-329 (TGIVVEDNTDIIL) are cytoplasmic. The chain crosses the membrane as a helical span at residues 330 to 352 (DPRRIKMKYLKSWFVVDFVSSIP). Over 353 to 374 (VDYIFLIVETRIDSEVYKTARA) the chain is Extracellular. Residues 375–410 (LRIVRFTKILSLLRLLRLSRLIRYIHQWEEIFHMTY) traverse the membrane as a helical; Voltage-sensor segment. The Cytoplasmic segment spans residues 411-413 (DLA). Residues 414–444 (SAVVRIVNLIGMMLLLCHWDGCLQFLVPMLQ) traverse the membrane as a helical segment. Topologically, residues 445 to 449 (DFPDD) are extracellular. The segment at residues 450-478 (CWVSLNNMVNNSWGKQYSYALFKAMSHML) is an intramembrane region (pore-forming). The Extracellular segment spans residues 479–488 (CIGYGRQAPM). The helical transmembrane segment at 489–521 (GMSDVWLTMLSMIVGATCYAMFIGHATALIQSL) threads the bilayer. At 522 to 1175 (DSSRRQYQEK…PVRSKLPSNL (654 aa)) the chain is on the cytoplasmic side. Residues Tyr-560, Lys-563, Phe-565, and Glu-567 each contribute to the 3',5'-cyclic GMP site. 3',5'-cyclic AMP is bound by residues Gly-660, Glu-661, Cys-663, Arg-670, Thr-671, Val-674, and Arg-711. 2 disordered regions span residues 801–820 (AIFR…AGQT) and 830–1175 (LAPS…PSNL). 4 stretches are compositionally biased toward low complexity: residues 839-854 (SPAS…SSAS), 900-912 (LGGS…SPLL), 948-966 (SPTS…LSPG), and 984-1004 (RLPF…SPRG). Residues 1038-1050 (ASSPPPPPPPPAP) are compositionally biased toward pro residues. 2 positions are modified to phosphoserine: Ser-1089 and Ser-1093. The segment covering 1102 to 1114 (PPFPRAPGRPPGA) has biased composition (pro residues).

Belongs to the potassium channel HCN family. As to quaternary structure, homotetramer. The channel is composed of a homo- or heterotetrameric complex of pore-forming subunits. Interacts with PEX5L with a 4:4 HCN4:PEX5L stoichiometry; reduces the effects of cAMP on the voltage-dependence and rate of activation. Interacts with IRAG1; regulates HCN4 channel activity. Interacts with IRAG2; regulates HCN4 channel activity. Post-translationally, S-palmitoylated. As to expression, highly expressed in the heart sinoatrial node (SAN). Not detected in atrium, ventricle, forebrain or cerebellum. Detected at very low levels in total brain.

The protein resides in the cell membrane. The catalysed reaction is K(+)(in) = K(+)(out). It carries out the reaction Na(+)(in) = Na(+)(out). Its activity is regulated as follows. Activated by cAMP and to a lesser extent by cGMP and cCMP. cAMP binding causes a conformation change that leads to the assembly of an active tetramer and channel opening by shifting the voltage-dependency towards more positive voltages. Binding of cAMP removes a tonic inhibition conferred by cyclic nucleotide-binding domain (CNBD) on channel opening. Cyclic dinucleotides can modulate HCN4 channel; cyclic dinucleotides acting as potent antagonists of cAMP. Inhibited by extracellular Cs(+) ions. Auxiliary subunits can also regulate HCN4 channel. IRAG1 causes a gain-of-function by shifting HCN4 activation to more depolarized membrane potentials in the absence of cAMP. In contrast, IRAG2 causes a loss-of-function by inhibiting cAMP-dependent potentiation of HCN4 activation. Its function is as follows. Hyperpolarization-activated ion channel that are permeable to Na(+) and K(+) ions with very slow activation and inactivation. Exhibits higher selectivity for K(+) over Na(+) ions. Contributes to the native pacemaker currents in heart (If) that regulate the rhythm of heart beat. Contributes to the native pacemaker currents in neurons (Ih). May mediate responses to sour stimuli. This is Potassium/sodium hyperpolarization-activated cyclic nucleotide-gated channel 4 (HCN4) from Oryctolagus cuniculus (Rabbit).